A 638-amino-acid polypeptide reads, in one-letter code: uncharacterized protein (638 aa).

One can recognise a CID domain in the interval Met1 to Lys138. 2 disordered regions span residues Gln318 to Ser338 and Leu615 to Lys638.

This is an uncharacterized protein from Schizosaccharomyces pombe (strain 972 / ATCC 24843) (Fission yeast).